The following is a 590-amino-acid chain: MSSACDAGDHYPLHLLVWKNDYRQLEKELQGQNVEAVDPRGRTLLHLAVSLGHLESARVLLRHKADVTKENRQGWTVLHEAVSTGDPEMVYTVLQHRDYHNTSMALEGVPELLQKILEAPDFYVQMKWEFTSWVPLVSRICPNDVCRIWKSGAKLRVDITLLGFENMSWIRGRRSFIFKGEDNWAELMEVNHDDKVVTTERFDLSQEMERLTLDLMKPKSREVERRLTSPVINTSLDTKNIAFERTKSGFWGWRTDKAEVVNGYEAKVYTVNNVNVITKIRTEHLTEEEKKRYKADRNPLESLLGTVEHQFGAQGDLTTECATANNPTAITPDEYFNEEFDLKDRDIGRPKELTIRTQKFKAMLWMCEEFPLSLVEQVIPIIDLMARTSAHFARLRDFIKLEFPPGFPVKIEIPLFHVLNARITFGNVNGCSTAEESVSQNVEGTQADSASHITNFEVDQSVFEIPESYYVQDNGRNVHLQDEDYEIMQFAIQQSLLESSRSQELSGPASNGGISQTNTYDAQYERAIQESLLTSTEGLCPSALSETSRFDNDLQLAMELSAKELEEWELRLQEEEAELQQVLQLSLTDK.

2 ANK repeats span residues 40-69 (RGRTLLHLAVSLGHLESARVLLRHKADVTK) and 73-102 (QGWTVLHEAVSTGDPEMVYTVLQHRDYHNT). S205 carries the phosphoserine modification. UIM domains lie at 483 to 502 (EDYEIMQFAIQQSLLESSRS), 519 to 538 (TYDAQYERAIQESLLTSTEG), 549 to 568 (RFDNDLQLAMELSAKELEEW), and 574 to 590 (EEEAELQQVLQLSLTDK). At S586 the chain carries Phosphoserine.

Interacts (via the UIM 3 and 4 repeats) with EGFR (ubiquitinated); the interaction is direct, inhibited by ANKRD13A monoubiquitination and may regulate EGFR internalization. Monoubiquitinated, inhibits interaction with ubiquitinated EGFR.

It is found in the cell membrane. The protein resides in the late endosome. In terms of biological role, ubiquitin-binding protein that specifically recognizes and binds 'Lys-63'-linked ubiquitin. Does not bind 'Lys-48'-linked ubiquitin. Positively regulates the internalization of ligand-activated EGFR by binding to the Ub moiety of ubiquitinated EGFR at the cell membrane. In Homo sapiens (Human), this protein is Ankyrin repeat domain-containing protein 13A (ANKRD13A).